Reading from the N-terminus, the 417-residue chain is Maltodextrin-binding protein MdxE (417 aa).

The first 22 residues, 1–22 (MVLLKKGFAILAASFLAIGLAA), serve as a signal peptide directing secretion. Cys23 carries N-palmitoyl cysteine lipidation. A lipid anchor (S-diacylglycerol cysteine) is attached at Cys23.

Belongs to the bacterial solute-binding protein 1 family. The complex is composed of two ATP-binding proteins (MsmX), two transmembrane proteins (MdxF and MdxG) and a solute-binding protein (MdxE).

It is found in the cell membrane. Inhibited by glucose and lactose. Functionally, part of the ABC transporter complex involved in maltodextrin import. Binds maltodextrin. Can also bind maltose with low affinity, but is not involved in its uptake. This chain is Maltodextrin-binding protein MdxE (mdxE), found in Bacillus subtilis (strain 168).